The chain runs to 71 residues: Small ribosomal subunit protein eS17 (71 aa).

This sequence belongs to the eukaryotic ribosomal protein eS17 family.

This chain is Small ribosomal subunit protein eS17, found in Pyrobaculum aerophilum (strain ATCC 51768 / DSM 7523 / JCM 9630 / CIP 104966 / NBRC 100827 / IM2).